The chain runs to 344 residues: tRNA N6-adenosine threonylcarbamoyltransferase (344 aa).

H113 and H117 together coordinate Fe cation. Substrate is bound by residues 135 to 139 (LVSGG), D169, G182, D186, and N278. D306 contacts Fe cation. Positions 325-344 (ESPISVGTDPSLSVETPQVF) are disordered. Polar residues predominate over residues 326–344 (SPISVGTDPSLSVETPQVF).

Belongs to the KAE1 / TsaD family. It depends on Fe(2+) as a cofactor.

It localises to the cytoplasm. The enzyme catalyses L-threonylcarbamoyladenylate + adenosine(37) in tRNA = N(6)-L-threonylcarbamoyladenosine(37) in tRNA + AMP + H(+). Required for the formation of a threonylcarbamoyl group on adenosine at position 37 (t(6)A37) in tRNAs that read codons beginning with adenine. Is involved in the transfer of the threonylcarbamoyl moiety of threonylcarbamoyl-AMP (TC-AMP) to the N6 group of A37, together with TsaE and TsaB. TsaD likely plays a direct catalytic role in this reaction. The protein is tRNA N6-adenosine threonylcarbamoyltransferase of Corynebacterium glutamicum (strain R).